The following is a 138-amino-acid chain: Phosphoribosyl-AMP cyclohydrolase (138 aa).

Residue Asp86 participates in Mg(2+) binding. Cys87 lines the Zn(2+) pocket. Mg(2+) contacts are provided by Asp88 and Asp90. Zn(2+) is bound by residues Cys104 and Cys111.

It belongs to the PRA-CH family. As to quaternary structure, homodimer. Requires Mg(2+) as cofactor. Zn(2+) is required as a cofactor.

It is found in the cytoplasm. The enzyme catalyses 1-(5-phospho-beta-D-ribosyl)-5'-AMP + H2O = 1-(5-phospho-beta-D-ribosyl)-5-[(5-phospho-beta-D-ribosylamino)methylideneamino]imidazole-4-carboxamide. The protein operates within amino-acid biosynthesis; L-histidine biosynthesis; L-histidine from 5-phospho-alpha-D-ribose 1-diphosphate: step 3/9. Catalyzes the hydrolysis of the adenine ring of phosphoribosyl-AMP. This Marinobacter nauticus (strain ATCC 700491 / DSM 11845 / VT8) (Marinobacter aquaeolei) protein is Phosphoribosyl-AMP cyclohydrolase.